The following is a 627-amino-acid chain: (+)-sabinene synthase, chloroplastic (627 aa).

The transit peptide at 1-46 (MSVISIVPLASNSCLYKSLMSSTHELKALCRPIATLGMCRRGKSVM) directs the protein to the chloroplast. Positions 378, 382, and 530 each coordinate Mg(2+). A DDXXD motif motif is present at residues 378–382 (DDIYD).

Belongs to the terpene synthase family. Tpsd subfamily. In terms of assembly, monomer. It depends on Mg(2+) as a cofactor.

It localises to the plastid. The protein localises to the chloroplast. The enzyme catalyses (2E)-geranyl diphosphate = (1R,5R)-sabinene + diphosphate. It participates in terpene metabolism; oleoresin biosynthesis. In terms of biological role, terpene synthase (TPS) involved in defensive oleoresin formation in conifers in response to insect attack (e.g. white pine weevil P.strobi) or other injury. Produces (+)-sabinene from geranyl diphosphate, but has no activity with geranylgeranyl diphosphate or farnesyl diphosphate. The protein is (+)-sabinene synthase, chloroplastic (TPS-sab) of Picea sitchensis (Sitka spruce).